The chain runs to 384 residues: Alanine racemase (384 aa).

K39 acts as the Proton acceptor; specific for D-alanine in catalysis. K39 bears the N6-(pyridoxal phosphate)lysine mark. Residue R138 participates in substrate binding. Y265 acts as the Proton acceptor; specific for L-alanine in catalysis. M312 serves as a coordination point for substrate.

It belongs to the alanine racemase family. Requires pyridoxal 5'-phosphate as cofactor.

It catalyses the reaction L-alanine = D-alanine. It functions in the pathway amino-acid biosynthesis; D-alanine biosynthesis; D-alanine from L-alanine: step 1/1. Its function is as follows. Catalyzes the interconversion of L-alanine and D-alanine. May also act on other amino acids. The polypeptide is Alanine racemase (alr) (Staphylococcus carnosus (strain TM300)).